The following is a 239-amino-acid chain: Ribonuclease HII (239 aa).

Positions 30–221 (GPVAGVDEVG…VRRLVTAGTP (192 aa)) constitute an RNase H type-2 domain. A divalent metal cation-binding residues include aspartate 36, glutamate 37, and aspartate 130.

This sequence belongs to the RNase HII family. Requires Mn(2+) as cofactor. It depends on Mg(2+) as a cofactor.

The protein resides in the cytoplasm. It carries out the reaction Endonucleolytic cleavage to 5'-phosphomonoester.. Its function is as follows. Endonuclease that specifically degrades the RNA of RNA-DNA hybrids. The protein is Ribonuclease HII of Mycobacterium sp. (strain KMS).